The chain runs to 428 residues: Methyl-branched lipid omega-hydroxylase (428 aa).

Cys-379 contributes to the heme binding site.

The protein belongs to the cytochrome P450 family. Heme is required as a cofactor.

The enzyme catalyses a methyl-branched lipid + O2 + 2 reduced ferredoxin [iron-sulfur] cluster + 2 H(+) = an omega-hydroxy-methyl-branched lipid + H2O + 2 oxidized ferredoxin [iron-sulfur] cluster.. It carries out the reaction cholest-4-en-3-one + 6 reduced [2Fe-2S]-[ferredoxin] + 3 O2 + 5 H(+) = (25R)-3-oxocholest-4-en-26-oate + 6 oxidized [2Fe-2S]-[ferredoxin] + 4 H2O. It participates in lipid metabolism; branched-chain fatty acid metabolism. Its function is as follows. Primarily hydroxylates the omega-carbon of a number of methyl-branched lipids, including (2E,6E)-farnesol, phytanate, geranylgeraniol, 15-methylpalmitate and (2E,6E)-farnesyl diphosphate. Also catalyzes the sequential oxidation of the terminal methyl of cholest-4-en-3-one into (25R)-26-hydroxycholest-4-en-3-one (alcohol), (25R)-26-oxocholest-4-en-3-one (aldehyde), to finally yield the carboxylic acid (25R)-3-oxocholest-4-en-26-oate. Also able to sequentially oxidize cholesterol itself, not only cholest-4-en-3-one. This chain is Methyl-branched lipid omega-hydroxylase (cyp124), found in Mycobacterium bovis (strain ATCC BAA-935 / AF2122/97).